Reading from the N-terminus, the 312-residue chain is DNA-directed RNA polymerase subunit alpha (312 aa).

The alpha N-terminal domain (alpha-NTD) stretch occupies residues 1 to 226; it reads MIEFEKPKIT…DHLNLFVDLS (226 aa). The interval 243–312 is alpha C-terminal domain (alpha-CTD); the sequence is TERVLDKIIE…ELGLSLKKRK (70 aa).

Belongs to the RNA polymerase alpha chain family. In terms of assembly, homodimer. The RNAP catalytic core consists of 2 alpha, 1 beta, 1 beta' and 1 omega subunit. When a sigma factor is associated with the core the holoenzyme is formed, which can initiate transcription.

The catalysed reaction is RNA(n) + a ribonucleoside 5'-triphosphate = RNA(n+1) + diphosphate. In terms of biological role, DNA-dependent RNA polymerase catalyzes the transcription of DNA into RNA using the four ribonucleoside triphosphates as substrates. This is DNA-directed RNA polymerase subunit alpha from Lactococcus lactis subsp. lactis (strain IL1403) (Streptococcus lactis).